The chain runs to 789 residues: Ent-kaur-16-ene synthase, chloroplastic (789 aa).

Residues D536, D540, N680, S684, and E688 each coordinate Mg(2+). The DDXXD motif signature appears at 536–540; it reads DDFYD.

This sequence belongs to the terpene synthase family. Mg(2+) is required as a cofactor. In terms of processing, the N-terminus is blocked. In terms of tissue distribution, abundant in most tissues. Present in low amounts in mature cotyledons.

The protein resides in the plastid. It localises to the chloroplast. The enzyme catalyses ent-copalyl diphosphate = ent-kaur-16-ene + diphosphate. The protein operates within plant hormone biosynthesis; gibberellin biosynthesis. Functionally, catalyzes the conversion of ent-copalyl diphosphate to the gibberellin precursor ent-kaur-16-ene. The sequence is that of Ent-kaur-16-ene synthase, chloroplastic from Cucurbita maxima (Pumpkin).